The chain runs to 744 residues: Eukaryotic translation initiation factor 3 subunit B (744 aa).

Positions 1–20 (MAPSFDHLPDPEEDEYDEEE) are disordered. The segment covering 11–20 (PEEDEYDEEE) has biased composition (acidic residues). Positions 40-126 (TFVVIDGLPE…HTLRVNKLTD (87 aa)) constitute an RRM domain. WD repeat units lie at residues 193-232 (DRQH…RQKR), 234-290 (AHPF…PLRS), 307-348 (PVKR…LLDK), and 577-622 (ADHY…LREE). Residues 699–714 (EREDAGLPRDPLEPLK) show a composition bias toward basic and acidic residues. Residues 699 to 722 (EREDAGLPRDPLEPLKSKMASGDE) are disordered.

This sequence belongs to the eIF-3 subunit B family. As to quaternary structure, component of the eukaryotic translation initiation factor 3 (eIF-3) complex.

Its subcellular location is the cytoplasm. Its function is as follows. RNA-binding component of the eukaryotic translation initiation factor 3 (eIF-3) complex, which is involved in protein synthesis of a specialized repertoire of mRNAs and, together with other initiation factors, stimulates binding of mRNA and methionyl-tRNAi to the 40S ribosome. The eIF-3 complex specifically targets and initiates translation of a subset of mRNAs involved in cell proliferation. In Sclerotinia sclerotiorum (strain ATCC 18683 / 1980 / Ss-1) (White mold), this protein is Eukaryotic translation initiation factor 3 subunit B (prt1).